The following is a 269-amino-acid chain: Bis(5'-nucleosyl)-tetraphosphatase, symmetrical (269 aa).

It belongs to the Ap4A hydrolase family.

It catalyses the reaction P(1),P(4)-bis(5'-adenosyl) tetraphosphate + H2O = 2 ADP + 2 H(+). Hydrolyzes diadenosine 5',5'''-P1,P4-tetraphosphate to yield ADP. The protein is Bis(5'-nucleosyl)-tetraphosphatase, symmetrical of Vibrio cholerae serotype O1 (strain ATCC 39541 / Classical Ogawa 395 / O395).